Here is a 913-residue protein sequence, read N- to C-terminus: Auxilin (913 aa).

Met-1 carries the N-acetylmethionine modification. Tandem repeats lie at residues 36 to 39 (NLKD), 40 to 43 (NLKD), and 44 to 47 (TLKD). The 3 X 4 AA approximate tandem repeats stretch occupies residues 36-47 (NLKDNLKDTLKD). The Phosphatase tensin-type domain maps to 55-222 (SVTSYTKGDL…GYMCDLLADK (168 aa)). Residue Ser-112 is modified to Phosphoserine. Cys-164 serves as the catalytic Phosphocysteine intermediate. The C2 tensin-type domain occupies 228–366 (FKPLTIKSIT…FQVTLDVELQ (139 aa)). Positions 409-417 (PIDIPPDNP) match the SH3-binding motif. The interval 451-776 (QESEQSDDEL…GKGSSNLEGK (326 aa)) is disordered. A phosphoserine mark is found at Ser-453 and Ser-456. The span at 506–523 (AMSNSFSPPAAPPTNSEL) shows a compositional bias: polar residues. Over residues 554-572 (ASTQSTPRRSATSTSASPT) the composition is skewed to low complexity. Residues Ser-563 and Ser-570 each carry the phosphoserine modification. Polar residues predominate over residues 599-629 (FLNTSSASSDPFLQPTRSPSPTVHASSTPAV). Residues 654–669 (SAATSPTGSSHGTPTH) show a composition bias toward low complexity. A J domain is found at 849–913 (TKWKPVGMAD…FENQGQKPLY (65 aa)).

As to quaternary structure, forms a complex composed of HSPA8, CLTC and DNAJC6. Interacts with HSPA8/HSC70 in an ATP-dependent manner; this interaction stimulates the HSPA8's ATPase activity. Interacts with CLTC; this interaction produces a local change in heavy-chain contacts, creating a detectable global distortion of the clathrin coat. Interacts with AP2A2. Interacts with DNM1(GTP-bound form); this interaction allows clathrin-coated vesicle (CCV) formation at the plasma membrane. In terms of processing, phosphorylation at Ser-570 modulates its ability to bind CLTC and therefore the synaptic vesicle endocytosis (SVE). The N-terminus is blocked. As to expression, expressed in various brain regions, including cerebellum, corpus callosum, cortex, striatum, brainstem, pons, putamen, spinal cord and substantia nigra. Very low expression in non-neural tissues such as leukocytes, liver, adipose tissue, skeletal muscle and bone marrow.

The protein resides in the cytoplasmic vesicle. It is found in the clathrin-coated vesicle. May act as a protein phosphatase and/or a lipid phosphatase. Co-chaperone that recruits HSPA8/HSC70 to clathrin-coated vesicles (CCVs) and promotes the ATP-dependent dissociation of clathrin from CCVs and participates in clathrin-mediated endocytosis of synaptic vesicles and their recycling and also in intracellular trafficking. Firstly, binds tightly to the clathrin cages, at a ratio of one DNAJC6 per clathrin triskelion. The HSPA8:ATP complex then binds to the clathrin-auxilin cage, initially at a ratio of one HSPA8 per triskelion leading to ATP hydrolysis stimulation and causing a conformational change in the HSPA8. This cycle is repeated three times to drive to a complex containing the clathrin-auxilin cage associated to three HSPA8:ADP complex. The ATP hydrolysis of the third HSPA8:ATP complex leads to a concerted dismantling of the cage into component triskelia. Then, dissociates from the released triskelia and be recycled to initiate another cycle of HSPA8's recruitment. Also acts during the early steps of clathrin-coated vesicle (CCV) formation through its interaction with the GTP bound form of DNM1. This Homo sapiens (Human) protein is Auxilin.